The sequence spans 322 residues: Undecaprenyl-phosphate 4-deoxy-4-formamido-L-arabinose transferase (322 aa).

Residues 1-235 (MFEIHPVKKV…TCLTTTPLRM (235 aa)) are Cytoplasmic-facing. Residues 236-256 (LSLLGSIIAIGGFSIAVLLVI) form a helical membrane-spanning segment. Over 257–269 (LRLTFGPQWAAEG) the chain is Periplasmic. A helical membrane pass occupies residues 270 to 290 (VFMLFAVLFTFIGAQFIGMGL). Topologically, residues 291–322 (LGEYIGRIYTDVRARPRYFVQQVIRPSSKENE) are cytoplasmic.

It belongs to the glycosyltransferase 2 family.

It is found in the cell inner membrane. The enzyme catalyses UDP-4-deoxy-4-formamido-beta-L-arabinose + di-trans,octa-cis-undecaprenyl phosphate = 4-deoxy-4-formamido-alpha-L-arabinopyranosyl di-trans,octa-cis-undecaprenyl phosphate + UDP. It participates in glycolipid biosynthesis; 4-amino-4-deoxy-alpha-L-arabinose undecaprenyl phosphate biosynthesis; 4-amino-4-deoxy-alpha-L-arabinose undecaprenyl phosphate from UDP-4-deoxy-4-formamido-beta-L-arabinose and undecaprenyl phosphate: step 1/2. It functions in the pathway bacterial outer membrane biogenesis; lipopolysaccharide biosynthesis. Functionally, catalyzes the transfer of 4-deoxy-4-formamido-L-arabinose from UDP to undecaprenyl phosphate. The modified arabinose is attached to lipid A and is required for resistance to polymyxin and cationic antimicrobial peptides. The sequence is that of Undecaprenyl-phosphate 4-deoxy-4-formamido-L-arabinose transferase from Shigella sonnei (strain Ss046).